The sequence spans 467 residues: tRNA-2-methylthio-N(6)-dimethylallyladenosine synthase (467 aa).

Residues 5–125 form the MTTase N-terminal domain; sequence RKLHIKSYGC…LPQLLAQASR (121 aa). The [4Fe-4S] cluster site is built by cysteine 14, cysteine 50, cysteine 88, cysteine 166, cysteine 170, and cysteine 173. Residues 152 to 384 form the Radical SAM core domain; it reads RARGVSAFVT…QSLIDSQQAA (233 aa). The TRAM domain occupies 387–449; sequence KAAIGSVVDV…RYSLLGELVA (63 aa).

It belongs to the methylthiotransferase family. MiaB subfamily. In terms of assembly, monomer. [4Fe-4S] cluster serves as cofactor.

The protein resides in the cytoplasm. The catalysed reaction is N(6)-dimethylallyladenosine(37) in tRNA + (sulfur carrier)-SH + AH2 + 2 S-adenosyl-L-methionine = 2-methylsulfanyl-N(6)-dimethylallyladenosine(37) in tRNA + (sulfur carrier)-H + 5'-deoxyadenosine + L-methionine + A + S-adenosyl-L-homocysteine + 2 H(+). In terms of biological role, catalyzes the methylthiolation of N6-(dimethylallyl)adenosine (i(6)A), leading to the formation of 2-methylthio-N6-(dimethylallyl)adenosine (ms(2)i(6)A) at position 37 in tRNAs that read codons beginning with uridine. This is tRNA-2-methylthio-N(6)-dimethylallyladenosine synthase from Bradyrhizobium sp. (strain ORS 278).